The chain runs to 539 residues: MTKYIFVTGGVVSSLGKGITASSIGRLLKNRGLKVTMQKFDPYINIDPGTMNPYQHGEVFVTDDGTEADLDLGHYERLVDVRTSKYSNVTTGKIYQEVLQRERRGDYHGGTVQVIPHVTNMIKEKVMRAAQMTDTDVVISEIGGTVGDMESTPFMEAIRQMRREVGSENVMYVHVTFVPYLRAAKELKSKPTQQSVSMLRSIGIQPNMLVLRSEMPVPQEMKDKISTFTDVPVDYIVESLDAPSLFDVPLSYQEQGVDQKVVDFLHIDSPKPVADMDEWRRMDERAKNLKYKTKITLVGKYVELEDAYISVTDALHHAGYLYNSKIEVEKIQAEDITEDNVAELLKDTQGLIVPGGFGTRGLDGMITSIKYAREHDIPFLGICLGMQMASVEFARNVLHLEDANSAEAEPNCKNNIIDLMADQRDQEKIGGTLRLGLYPAMLKAGTKTRECYDGQEVIQERHRHRYEFNNKYREDFEKAGMTFSGISPDNHLVEIVEITDKKFFVAAQYHPEFLSRPNRPEGLFKGFIGAASGLQVDKF.

An amidoligase domain region spans residues 1-267 (MTKYIFVTGG…DQKVVDFLHI (267 aa)). A CTP-binding site is contributed by Ser-13. Residue Ser-13 participates in UTP binding. Residue 14 to 19 (SLGKGI) participates in ATP binding. Residue Tyr-54 participates in L-glutamine binding. ATP is bound at residue Asp-71. Mg(2+) is bound by residues Asp-71 and Glu-141. CTP-binding positions include 148–150 (DME), 188–193 (KSKPTQ), and Lys-224. UTP contacts are provided by residues 188–193 (KSKPTQ) and Lys-224. Positions 294–537 (KITLVGKYVE…IGAASGLQVD (244 aa)) constitute a Glutamine amidotransferase type-1 domain. Gly-356 is a binding site for L-glutamine. Cys-383 acts as the Nucleophile; for glutamine hydrolysis in catalysis. Residues 384–387 (LGMQ), Glu-407, and Arg-465 contribute to the L-glutamine site. Residues His-510 and Glu-512 contribute to the active site.

Belongs to the CTP synthase family. In terms of assembly, homotetramer.

The catalysed reaction is UTP + L-glutamine + ATP + H2O = CTP + L-glutamate + ADP + phosphate + 2 H(+). The enzyme catalyses L-glutamine + H2O = L-glutamate + NH4(+). It catalyses the reaction UTP + NH4(+) + ATP = CTP + ADP + phosphate + 2 H(+). It participates in pyrimidine metabolism; CTP biosynthesis via de novo pathway; CTP from UDP: step 2/2. Allosterically activated by GTP, when glutamine is the substrate; GTP has no effect on the reaction when ammonia is the substrate. The allosteric effector GTP functions by stabilizing the protein conformation that binds the tetrahedral intermediate(s) formed during glutamine hydrolysis. Inhibited by the product CTP, via allosteric rather than competitive inhibition. Its function is as follows. Catalyzes the ATP-dependent amination of UTP to CTP with either L-glutamine or ammonia as the source of nitrogen. Regulates intracellular CTP levels through interactions with the four ribonucleotide triphosphates. The protein is CTP synthase of Lactobacillus delbrueckii subsp. bulgaricus (strain ATCC 11842 / DSM 20081 / BCRC 10696 / JCM 1002 / NBRC 13953 / NCIMB 11778 / NCTC 12712 / WDCM 00102 / Lb 14).